Reading from the N-terminus, the 506-residue chain is Steroid (22S)-hydroxylase (506 aa).

The helical transmembrane segment at 12–32 (LLFFLPFILLALLTFYTTTVA) threads the bilayer. Position 449 (Cys449) interacts with heme.

The protein belongs to the cytochrome P450 family. Heme is required as a cofactor. Highly expressed in roots and leaf blades. Expressed in shoot apex, stems, leaf sheaths, inflorescences and flowers.

The protein localises to the membrane. It carries out the reaction a C28-steroid + reduced [NADPH--hemoprotein reductase] + O2 = a (22S)-22-hydroxy C28-steroid + oxidized [NADPH--hemoprotein reductase] + H2O + H(+). The catalysed reaction is campesterol + reduced [NADPH--hemoprotein reductase] + O2 = (22S)-22-hydroxycampesterol + oxidized [NADPH--hemoprotein reductase] + H2O + H(+). It catalyses the reaction campestanol + reduced [NADPH--hemoprotein reductase] + O2 = 6-deoxycathasterone + oxidized [NADPH--hemoprotein reductase] + H2O + H(+). It participates in plant hormone biosynthesis; brassinosteroid biosynthesis. In terms of biological role, catalyzes the C22-alpha-hydroxylation step in brassinosteroid biosynthesis, which is the rate-limiting step in this biosynthetic pathway. Catalyzes the conversion of campesterol (CR) to (22S)-22-hydroxycampesterol (22-OHCR, 22-hydroxyCR) and of campestanol (CN) to 6-deoxycathasterone (6-deoxoCT). Required for auxin responses involved in the regulation of epidermal cells length of the lamina joint. The protein is Steroid (22S)-hydroxylase of Oryza sativa subsp. japonica (Rice).